Consider the following 427-residue polypeptide: Histidine--tRNA ligase (427 aa).

Belongs to the class-II aminoacyl-tRNA synthetase family. As to quaternary structure, homodimer.

It is found in the cytoplasm. The enzyme catalyses tRNA(His) + L-histidine + ATP = L-histidyl-tRNA(His) + AMP + diphosphate + H(+). The chain is Histidine--tRNA ligase from Corynebacterium urealyticum (strain ATCC 43042 / DSM 7109).